The chain runs to 76 residues: Tautomerase PptA (76 aa).

The Proton acceptor; via imino nitrogen role is filled by Pro-2.

It belongs to the 4-oxalocrotonate tautomerase family. PptA subfamily. Homodimer.

The protein resides in the cytoplasm. The polypeptide is Tautomerase PptA (Pectobacterium carotovorum subsp. carotovorum (strain PC1)).